The sequence spans 371 residues: Dihydroorotate dehydrogenase (quinone) (371 aa).

FMN is bound by residues 79–83 (AGFDK) and threonine 103. Residue lysine 83 coordinates substrate. Residue 128–132 (NRMGF) coordinates substrate. Residues asparagine 156 and asparagine 189 each contribute to the FMN site. Asparagine 189 is a binding site for substrate. Serine 192 functions as the Nucleophile in the catalytic mechanism. Substrate is bound at residue asparagine 194. FMN is bound by residues lysine 225 and threonine 253. Residue 254–255 (NT) participates in substrate binding. FMN is bound by residues glycine 279, glycine 308, and 329–330 (YT).

It belongs to the dihydroorotate dehydrogenase family. Type 2 subfamily. As to quaternary structure, monomer. Requires FMN as cofactor.

Its subcellular location is the cell membrane. The enzyme catalyses (S)-dihydroorotate + a quinone = orotate + a quinol. Its pathway is pyrimidine metabolism; UMP biosynthesis via de novo pathway; orotate from (S)-dihydroorotate (quinone route): step 1/1. In terms of biological role, catalyzes the conversion of dihydroorotate to orotate with quinone as electron acceptor. This chain is Dihydroorotate dehydrogenase (quinone), found in Corynebacterium glutamicum (strain ATCC 13032 / DSM 20300 / JCM 1318 / BCRC 11384 / CCUG 27702 / LMG 3730 / NBRC 12168 / NCIMB 10025 / NRRL B-2784 / 534).